Consider the following 474-residue polypeptide: Trehalose-6-phosphate synthase (474 aa).

Position 10 (arginine 10) interacts with D-glucose 6-phosphate. 22-23 (GG) contacts UDP-alpha-D-glucose. D-glucose 6-phosphate-binding residues include tyrosine 77 and aspartate 131. Residues arginine 263 and lysine 268 each contribute to the UDP-alpha-D-glucose site. D-glucose 6-phosphate is bound at residue arginine 301. UDP-alpha-D-glucose-binding positions include phenylalanine 340 and 366 to 370 (LVAKE).

It belongs to the glycosyltransferase 20 family. In terms of assembly, homotetramer.

The catalysed reaction is D-glucose 6-phosphate + UDP-alpha-D-glucose = alpha,alpha-trehalose 6-phosphate + UDP + H(+). It functions in the pathway glycan biosynthesis; trehalose biosynthesis. Functionally, probably involved in the osmoprotection via the biosynthesis of trehalose. Catalyzes the transfer of glucose from UDP-alpha-D-glucose (UDP-Glc) to D-glucose 6-phosphate (Glc-6-P) to form trehalose-6-phosphate. Acts with retention of the anomeric configuration of the UDP-sugar donor. The polypeptide is Trehalose-6-phosphate synthase (Shigella dysenteriae serotype 1 (strain Sd197)).